The following is an 869-amino-acid chain: Aconitate hydratase B (869 aa).

Substrate-binding positions include Arg191, 244–246 (SSR), 417–419 (QDT), and Ser501. Residues Cys713, Cys772, and Cys775 each coordinate [4Fe-4S] cluster. Residues Arg794 and Arg799 each contribute to the substrate site.

The protein belongs to the aconitase/IPM isomerase family. Monomer. The cofactor is [4Fe-4S] cluster.

The catalysed reaction is citrate = D-threo-isocitrate. The enzyme catalyses (2S,3R)-3-hydroxybutane-1,2,3-tricarboxylate = 2-methyl-cis-aconitate + H2O. Its pathway is carbohydrate metabolism; tricarboxylic acid cycle; isocitrate from oxaloacetate: step 2/2. It participates in organic acid metabolism; propanoate degradation. Involved in the catabolism of short chain fatty acids (SCFA) via the tricarboxylic acid (TCA)(acetyl degradation route) and probably via the 2-methylcitrate cycle I (propionate degradation route). Catalyzes the reversible isomerization of citrate to isocitrate via cis-aconitate. Catalyzes the hydration of 2-methyl-cis-aconitate to yield (2R,3S)-2-methylisocitrate. The apo form of AcnB functions as a RNA-binding regulatory protein. The chain is Aconitate hydratase B (acnB) from Pseudomonas aeruginosa (strain ATCC 15692 / DSM 22644 / CIP 104116 / JCM 14847 / LMG 12228 / 1C / PRS 101 / PAO1).